Consider the following 157-residue polypeptide: Endoribonuclease YbeY (157 aa).

His113, His117, and His123 together coordinate Zn(2+).

The protein belongs to the endoribonuclease YbeY family. Zn(2+) is required as a cofactor.

The protein localises to the cytoplasm. Functionally, single strand-specific metallo-endoribonuclease involved in late-stage 70S ribosome quality control and in maturation of the 3' terminus of the 16S rRNA. The chain is Endoribonuclease YbeY from Ehrlichia ruminantium (strain Welgevonden).